The sequence spans 694 residues: Elongation factor G (694 aa).

Residues Glu-10–Val-285 enclose the tr-type G domain. GTP-binding positions include Ala-19–Thr-26, Asp-83–His-87, and Asn-137–Asp-140.

The protein belongs to the TRAFAC class translation factor GTPase superfamily. Classic translation factor GTPase family. EF-G/EF-2 subfamily.

It is found in the cytoplasm. Its function is as follows. Catalyzes the GTP-dependent ribosomal translocation step during translation elongation. During this step, the ribosome changes from the pre-translocational (PRE) to the post-translocational (POST) state as the newly formed A-site-bound peptidyl-tRNA and P-site-bound deacylated tRNA move to the P and E sites, respectively. Catalyzes the coordinated movement of the two tRNA molecules, the mRNA and conformational changes in the ribosome. This chain is Elongation factor G, found in Limosilactobacillus fermentum (strain NBRC 3956 / LMG 18251) (Lactobacillus fermentum).